The sequence spans 54 residues: uncharacterized protein (54 aa).

This is an uncharacterized protein from Saccharomyces cerevisiae (strain ATCC 204508 / S288c) (Baker's yeast).